A 678-amino-acid chain; its full sequence is MHLFFLTAVAFVITSVSVDASVAKDPRGHAPNRTEVDTVNASSSTRLLRKNSTVDLVGEERAPSIVENIKALVKSSAVTPAKLQQWLDERLPAGLVFKNMNLDEPNIFSLLHEPNFAKWVQYADDLSAKSSHKESSVISTLTSLHGDKVVYDTIQAAKLYPQLSELALKLEKDQIRFWIATRKDPSVVFEALNLNWAGISIFPKPEFSAWLKYVDDVNARHPKEAPLSIIPTLKQRFSRGDEAGTDVLLKLIANGKATTEAKTVANKVESALFDFWLNSRETPDKVMDAFKYGTTTQAFLGSPRWKEWERYLSAYNARYPEKKATAIETLTRKYGDAQLLDTLIGASSKGETKTLAAKLQAQQFDRWMNLKESPLDVYNRLRSSYGDTAFFNEPQLNVWVSYMNVFVDKNPSKVDKMFLELGDTFGDMRLFRVLGEAKKFPNLESTATKLQMEKASTLFASGKSPEGIFKVLALDNVGDDILSNTLFHKWLAYLQKFNKEHPNNQESWFDMLRISYQPFGVERIIETGRKNPLTRLMAEKVENAYHNYWLDIKMEPKTAFRSLHLDESGEKLLADPKFNTWVQYLKTFNDRYPNEKTTVIDGLRDNSHDIALLRMFSAAKNDPSTEKLATDLQSALILKWQDAKKTPEELKRVFVGVPAADEMLDRYIKLLAVASSTP.

The signal sequence occupies residues 1-20 (MHLFFLTAVAFVITSVSVDA). Residues 46-61 (RLLRKNSTVDLVGEER) carry the RxLR-dEER motif.

The protein belongs to the RxLR effector family.

It is found in the secreted. The protein resides in the host cytoplasm. Its function is as follows. Effector that enhances P.infestans colonization of Nicotiana benthamiana leaves. The protein is RxLR effector protein PITG_16705 of Phytophthora infestans (strain T30-4) (Potato late blight agent).